Consider the following 504-residue polypeptide: Maturase K (504 aa).

It belongs to the intron maturase 2 family. MatK subfamily.

It localises to the plastid. The protein localises to the chloroplast. In terms of biological role, usually encoded in the trnK tRNA gene intron. Probably assists in splicing its own and other chloroplast group II introns. In Aucuba japonica (Japanese laurel), this protein is Maturase K.